Here is a 581-residue protein sequence, read N- to C-terminus: Prolactin receptor (581 aa).

The N-terminal stretch at 1 to 24 is a signal peptide; it reads MKENAASRVLFILLLFLFASLLNG. At 25 to 237 the chain is on the extracellular side; that stretch reads QSPPEKPKLI…NDFPVKDTSM (213 aa). 2 consecutive Fibronectin type-III domains span residues 27-127 and 129-229; these read PPEK…IVEP and PPVN…IPND. Cys-36 and Cys-46 are oxidised to a cystine. N-linked (GlcNAc...) asparagine glycosylation occurs at Asn-59. Cys-75 and Cys-86 are joined by a disulfide. The N-linked (GlcNAc...) asparagine glycan is linked to Asn-132. Positions 211 and 212 each coordinate Zn(2+). The WSXWS motif signature appears at 215–219; that stretch reads WSEWS. A helical membrane pass occupies residues 238–258; the sequence is WIFVGVLSAVICLIMVWAVAL. The Cytoplasmic portion of the chain corresponds to 259–581; it reads KGYSMVTCIL…SAKKAPPALP (323 aa). The Box 1 motif signature appears at 267-275; that stretch reads ILPPVPGPK. Basic and acidic residues-rich tracts occupy residues 323 to 349 and 375 to 388; these read QHLMPHPSKEHMEQGVKPMHLDPDTDS and HIPEGPEKLEDPET. Disordered stretches follow at residues 323–388 and 462–492; these read QHLM…DPET and FKPSKTIETGGEGKAAKQSESEGYSSEPDQD.

The protein belongs to the type I cytokine receptor family. Type 1 subfamily. Interacts with SMARCA1. Interacts with NEK3 and VAV2 and this interaction is prolactin-dependent. Expressed in all tissues examined; liver, pituitary, adrenal gland, ovary and fetal liver.

It is found in the membrane. In terms of biological role, this is a receptor for the anterior pituitary hormone prolactin. This chain is Prolactin receptor (PRLR), found in Ovis aries (Sheep).